The following is a 332-amino-acid chain: 1-acyl-sn-glycerol-3-phosphate acyltransferase CHLREDRAFT_174358 (332 aa).

A helical membrane pass occupies residues 96 to 116; it reads FLLSLPLFVTMMVMAPLVLAF. Residues 163–168 carry the HXXXXD motif motif; it reads HQSFLD. The chain crosses the membrane as a helical span at residues 185 to 205; that stretch reads TSNFLIPIIGWSMFLTGHVMI. Residues 235–238 carry the EGTR motif motif; that stretch reads EGTR.

This sequence belongs to the 1-acyl-sn-glycerol-3-phosphate acyltransferase family.

The protein resides in the membrane. It catalyses the reaction a 1-acyl-sn-glycero-3-phosphate + an acyl-CoA = a 1,2-diacyl-sn-glycero-3-phosphate + CoA. It functions in the pathway phospholipid metabolism; CDP-diacylglycerol biosynthesis; CDP-diacylglycerol from sn-glycerol 3-phosphate: step 2/3. Its function is as follows. Converts lysophosphatidic acid (LPA) into phosphatidic acid by incorporating an acyl moiety at the sn-2 position of the glycerol backbone. The sequence is that of 1-acyl-sn-glycerol-3-phosphate acyltransferase CHLREDRAFT_174358 from Chlamydomonas reinhardtii (Chlamydomonas smithii).